Consider the following 374-residue polypeptide: Aminomethyltransferase (374 aa).

Belongs to the GcvT family. In terms of assembly, the glycine cleavage system is composed of four proteins: P, T, L and H.

The enzyme catalyses N(6)-[(R)-S(8)-aminomethyldihydrolipoyl]-L-lysyl-[protein] + (6S)-5,6,7,8-tetrahydrofolate = N(6)-[(R)-dihydrolipoyl]-L-lysyl-[protein] + (6R)-5,10-methylene-5,6,7,8-tetrahydrofolate + NH4(+). Its function is as follows. The glycine cleavage system catalyzes the degradation of glycine. The sequence is that of Aminomethyltransferase from Caldanaerobacter subterraneus subsp. tengcongensis (strain DSM 15242 / JCM 11007 / NBRC 100824 / MB4) (Thermoanaerobacter tengcongensis).